A 265-amino-acid chain; its full sequence is MFPRTYAVLGSTGNCGTALIENLLKTPDARIHAYCRNRPKLLQILPQLEESDRVTIFEGNIQDAELLQSCLRNCHAVFLVVSTNDNIPGCHLAQDTATAVIQALQDLKRNNPTSTVMPKLVLLSSATTDSQLSRDVPSLLRFILHRSASYVYEDLVVTEKLLHAQKDWLTSIFIKPGALSVDIQRGHALSQTDQDGPLSYLDLAAAMIEAADEETGCYDMQSLGVVNTNGKAKFPTGTPLCILVGLLRHYFPFLHPYLPMNTGPR.

Belongs to the avfA family.

It functions in the pathway secondary metabolite biosynthesis. Functionally, oxidoreductase; part of the gene cluster that mediates the biosynthesis of the tetrahydroxanthone dimer neosartorin, which exhibits antibacterial activity. The two different monomeric units appear to be synthesized by the same set of enzymes, among which the Baeyer-Villiger monooxygenase nsrF is the key enzyme for the divergence of the biosynthetic routes. The pathway begins with the synthesis of atrochrysone thioester by the polyketide synthase nsrB. The atrochrysone carboxyl ACP thioesterase nsrC then breaks the thioester bond and releases the atrochrysone carboxylic acid from AacuL. Atrochrysone carboxylic acid is decarboxylated by the decarboxylase nsrE, and oxidized by the anthrone oxygenase nsrD to yield emodin. Emodin is then reduced to emodin hydroquinone by the oxidoreductase nsrR. A-ring reduction by the short chain dehydrogenase nsrJ, dehydration by the scytalone dehydratase-like protein nsrI and probable spontaneous re-oxidation, results in overall deoxygenation to chrysophanol. The Baeyer-Villiger monooxygenase nsrF accepts chrysophanol as a substrate to insert one oxygen atom at two different positions to yield the precursors of both monomric units. NsrF is promiscuous/flexible in interacting with the 2 (non methylated and methylated) aromatic rings of chrysophanol, thus diverging the biosynthetic pathway at this point. After the hydrolysis of the lactones, methylesterification by the methyltransferase nsrG yields respectively moniliphenone and 2,2',6'-trihydroxy-4-methyl-6-methoxya-cyldiphenylmethanone. The next steps are the hydroxylation by the FAD-dependent monooxygenase nsrK, followed by isomerization by the monooxygenase nsrQ. The short chain dehydrogenase/reductase nsrO then catalyzes the C-5 ketoreduction to give the xanthone skeleton of blennolide C and 5-acetylblennolide A. The acetyltransferase nsrL has a strict substrate specificity and uses only blennolide A but not blennolide C to yield 5-acetylblennolide A as the single-acetylated product. In the final step of the biosynthesis, the heterodimerization of the 2 xanthones, blennolide C and 5-acetylblennolide A, is catalyzed by the cytochrome P450 monooxygenase nsrP. NsrP can utilize at least three different xanthones as its substrates to perform the dimerization reaction. The protein is Oxidoreductase nsrR of Aspergillus novofumigatus (strain IBT 16806).